We begin with the raw amino-acid sequence, 351 residues long: MIEKLEELRAQWRKLQQEVENPSLFSSTQSYRERMRDHAYLSRLMEEYDRYLLTEKQLEDAHVLIQDESDADFKDVIRQEIRTLEAALHTSQKRLKTLLIPPDSLQEKNIIMEIRGGTGGDEAALFAADLFRMYTHYAESKQWRYEVLAVSETELGGFKEITFSISGRDVYGSLRYESGVHRVQRVPSTEASGRIHTSAVTVAVLPEMEETEVDIRAEDVRVDVMRASGPGGQCVNTTDSAVRLTHLPTGIVVVCQDEKSQIKNKAKAMRVLRSRVYDLEESKRQVARARERKSQVGSGDRSERIRTYNFPQNRVTDHRVRVTLYKLDAVMQGALDDIIEPLCIASRESVI.

Glutamine 233 bears the N5-methylglutamine mark.

It belongs to the prokaryotic/mitochondrial release factor family. Post-translationally, methylated by PrmC. Methylation increases the termination efficiency of RF1.

It localises to the cytoplasm. Its function is as follows. Peptide chain release factor 1 directs the termination of translation in response to the peptide chain termination codons UAG and UAA. This chain is Peptide chain release factor 1 (prfA), found in Treponema pallidum (strain Nichols).